The primary structure comprises 84 residues: UPF0457 protein BC_3525 (84 aa).

It belongs to the UPF0457 family.

This Bacillus cereus (strain ATCC 14579 / DSM 31 / CCUG 7414 / JCM 2152 / NBRC 15305 / NCIMB 9373 / NCTC 2599 / NRRL B-3711) protein is UPF0457 protein BC_3525.